The chain runs to 623 residues: Mu-like prophage FluMu defective tail fiber protein (623 aa).

To phage Mu protein S.

This chain is Mu-like prophage FluMu defective tail fiber protein, found in Haemophilus influenzae (strain ATCC 51907 / DSM 11121 / KW20 / Rd).